The following is a 480-amino-acid chain: Carboxy-terminal processing protease CtpB (480 aa).

The first 23 residues, 1–23, serve as a signal peptide directing secretion; sequence MNQKIMAVIAAGSMLFGGAGVYA. A PDZ domain is found at 92–182; the sequence is SVYMDKQTAK…SSVSMKIQRP (91 aa). Positions 113 to 116 are peptide binding; sequence GIGA. The Nucleophile role is filled by serine 309. Residues lysine 334 and glutamine 338 each act as charge relay system in the active site.

This sequence belongs to the peptidase S41A family. As to quaternary structure, homodimer. Post-translationally, is cleaved by SpoIVB in vitro and in vivo but this cleavage does not appear to be necessary for CtpB activation. CtpB can also cleave itself in vivo.

The protein resides in the forespore intermembrane space. The catalysed reaction is The enzyme shows specific recognition of a C-terminal tripeptide, Xaa-Yaa-Zaa, in which Xaa is preferably Ala or Leu, Yaa is preferably Ala or Tyr, and Zaa is preferably Ala, but then cleaves at a variable distance from the C-terminus. A typical cleavage is -Ala-Ala-|-Arg-Ala-Ala-Lys-Glu-Asn-Tyr-Ala-Leu-Ala-Ala.. Its activity is regulated as follows. Activated by peptide binding to the PDZ domain. Functionally, involved in the signal transduction pathway leading to the proteolytic activation of the mother cell transcription factor pro-sigma-K during sporulation. The signaling serine protease CtpB triggers pro-sigma-K processing by cleaving the pre-processed regulatory protein SpoIVFA and is necessary for the proper timing of sigma-K activation. In Bacillus subtilis (strain 168), this protein is Carboxy-terminal processing protease CtpB (ctpB).